A 101-amino-acid chain; its full sequence is Small ribosomal subunit protein uS14 (101 aa).

It belongs to the universal ribosomal protein uS14 family. Part of the 30S ribosomal subunit. Contacts proteins S3 and S10.

Functionally, binds 16S rRNA, required for the assembly of 30S particles and may also be responsible for determining the conformation of the 16S rRNA at the A site. The sequence is that of Small ribosomal subunit protein uS14 from Buchnera aphidicola subsp. Schizaphis graminum (strain Sg).